The chain runs to 201 residues: Aminoglycoside N(6')-acetyltransferase type 1 (201 aa).

The region spanning 25–192 (VTLRLMTEHD…PAVYMVQTRQ (168 aa)) is the N-acetyltransferase domain. Residues tryptophan 51 and aspartate 154 each coordinate substrate. Asparagine 159 contacts acetyl-CoA.

In terms of assembly, homodimer.

The catalysed reaction is kanamycin B + acetyl-CoA = N(6')-acetylkanamycin B + CoA + H(+). Its function is as follows. Catalyzes the transfer of an acetyl group from acetyl-CoA to the 6'-amino group of aminoglycoside molecules conferring resistance to antibiotics containing the purpurosamine ring including amikacin. The protein is Aminoglycoside N(6')-acetyltransferase type 1 (aacA4) of Klebsiella pneumoniae.